Consider the following 461-residue polypeptide: Eukaryotic translation initiation factor 3 subunit M (461 aa).

Positions 42–61 (LLEPLRQQEQSDAEPDRKQR) are disordered. Residues 205-376 (DQELAQTHVV…SEFLVHRATY (172 aa)) enclose the PCI domain. Positions 422–461 (AAEEAAQGKSGDKKGDRRQRRDQPQQSQPAPEAATAVAAE) are disordered. Residues 431–444 (SGDKKGDRRQRRDQ) show a composition bias toward basic and acidic residues. Low complexity predominate over residues 445–461 (PQQSQPAPEAATAVAAE).

It belongs to the eIF-3 subunit M family. As to quaternary structure, component of the eukaryotic translation initiation factor 3 (eIF-3) complex.

It is found in the cytoplasm. In terms of biological role, component of the eukaryotic translation initiation factor 3 (eIF-3) complex, which is involved in protein synthesis of a specialized repertoire of mRNAs and, together with other initiation factors, stimulates binding of mRNA and methionyl-tRNAi to the 40S ribosome. The eIF-3 complex specifically targets and initiates translation of a subset of mRNAs involved in cell proliferation. The polypeptide is Eukaryotic translation initiation factor 3 subunit M (Aspergillus terreus (strain NIH 2624 / FGSC A1156)).